The chain runs to 144 residues: Large ribosomal subunit protein uL13 (144 aa).

This sequence belongs to the universal ribosomal protein uL13 family. Part of the 50S ribosomal subunit.

Its function is as follows. This protein is one of the early assembly proteins of the 50S ribosomal subunit, although it is not seen to bind rRNA by itself. It is important during the early stages of 50S assembly. In Nitrosomonas europaea (strain ATCC 19718 / CIP 103999 / KCTC 2705 / NBRC 14298), this protein is Large ribosomal subunit protein uL13.